The chain runs to 396 residues: Stearoyl-[acyl-carrier-protein] 9-desaturase, chloroplastic (396 aa).

The transit peptide at 1-33 (MAIRINTATFQSDLYRSFAFPQPKPLRSPKFAM) directs the protein to the chloroplast. Positions 138, 176, 179, 229, 262, and 265 each coordinate Fe cation.

It belongs to the fatty acid desaturase type 2 family. In terms of assembly, homodimer. The cofactor is Fe(2+).

The protein resides in the plastid. It localises to the chloroplast. It carries out the reaction octadecanoyl-[ACP] + 2 reduced [2Fe-2S]-[ferredoxin] + O2 + 2 H(+) = (9Z)-octadecenoyl-[ACP] + 2 oxidized [2Fe-2S]-[ferredoxin] + 2 H2O. The protein operates within lipid metabolism; fatty acid metabolism. Functionally, converts stearoyl-ACP to oleoyl-ACP by introduction of a cis double bond between carbons 9 and 10 of the acyl chain. This Helianthus annuus (Common sunflower) protein is Stearoyl-[acyl-carrier-protein] 9-desaturase, chloroplastic.